The sequence spans 333 residues: Structure-specific endonuclease subunit SLX1 homolog (333 aa).

A GIY-YIG domain is found at 68–157 (DFFGVYCLLS…KSRRLRLLNL (90 aa)). The SLX1-type zinc-finger motif lies at 237 to 293 (CSLCLKPILSISELLRCHANETCKSHFHMRCLSKHALNAVDEYRTSLFPIQGQCPKC).

This sequence belongs to the SLX1 family. As to quaternary structure, forms a heterodimer with a member of the SLX4 family. Requires a divalent metal cation as cofactor.

Its subcellular location is the nucleus. Its function is as follows. Catalytic subunit of a heterodimeric structure-specific endonuclease that resolves DNA secondary structures generated during DNA repair and recombination. Has endonuclease activity towards branched DNA substrates, introducing single-strand cuts in duplex DNA close to junctions with ss-DNA. This chain is Structure-specific endonuclease subunit SLX1 homolog, found in Brugia malayi (Filarial nematode worm).